A 304-amino-acid polypeptide reads, in one-letter code: Protease HtpX homolog 1 (304 aa).

2 helical membrane-spanning segments follow: residues 17 to 37 (VTLF…IALL) and 39 to 59 (SWVL…WFSD). H140 contributes to the Zn(2+) binding site. Residue E141 is part of the active site. H144 contacts Zn(2+). A run of 2 helical transmembrane segments spans residues 151-171 (AVIT…RFAF) and 186-206 (AVLA…FLLI). E214 provides a ligand contact to Zn(2+).

Belongs to the peptidase M48B family. It depends on Zn(2+) as a cofactor.

Its subcellular location is the cell membrane. The sequence is that of Protease HtpX homolog 1 from Streptomyces coelicolor (strain ATCC BAA-471 / A3(2) / M145).